Consider the following 397-residue polypeptide: Elongation factor Tu 1 (397 aa).

Residues 10–206 (KPHVNIGTIG…AVDENIPQPE (197 aa)) enclose the tr-type G domain. Residues 19 to 26 (GHIDHGKT) form a G1 region. Residue 19 to 26 (GHIDHGKT) coordinates GTP. Position 26 (Thr26) interacts with Mg(2+). The G2 stretch occupies residues 62 to 66 (GITIS). Positions 83–86 (DCPG) are G3. GTP is bound by residues 83–87 (DCPGH) and 138–141 (NKAD). The G4 stretch occupies residues 138–141 (NKAD). The interval 176–178 (SAL) is G5.

The protein belongs to the TRAFAC class translation factor GTPase superfamily. Classic translation factor GTPase family. EF-Tu/EF-1A subfamily. As to quaternary structure, monomer.

It is found in the cytoplasm. It carries out the reaction GTP + H2O = GDP + phosphate + H(+). In terms of biological role, GTP hydrolase that promotes the GTP-dependent binding of aminoacyl-tRNA to the A-site of ribosomes during protein biosynthesis. The sequence is that of Elongation factor Tu 1 from Streptomyces avermitilis (strain ATCC 31267 / DSM 46492 / JCM 5070 / NBRC 14893 / NCIMB 12804 / NRRL 8165 / MA-4680).